The primary structure comprises 192 residues: UPF0301 protein BceJ2315_30870 (192 aa).

It belongs to the UPF0301 (AlgH) family.

This is UPF0301 protein BceJ2315_30870 from Burkholderia cenocepacia (strain ATCC BAA-245 / DSM 16553 / LMG 16656 / NCTC 13227 / J2315 / CF5610) (Burkholderia cepacia (strain J2315)).